A 376-amino-acid polypeptide reads, in one-letter code: Germination-specific cysteine protease 1 (376 aa).

The signal sequence occupies residues 1–22 (MAPSTKVLSLLLLYVVVSLASG). Residues 23 to 144 (DESIINDHLQ…KYSAAVNGKE (122 aa)) constitute a propeptide, activation peptide. Asn-93 carries an N-linked (GlcNAc...) asparagine glycan. Cystine bridges form between Cys-166–Cys-208, Cys-200–Cys-241, and Cys-299–Cys-351. Cys-169 is an active-site residue. Residues His-305 and Asn-325 contribute to the active site.

It belongs to the peptidase C1 family.

In terms of biological role, probable thiol protease. In Arabidopsis thaliana (Mouse-ear cress), this protein is Germination-specific cysteine protease 1.